Here is a 443-residue protein sequence, read N- to C-terminus: UDP-N-acetylmuramate--L-alanine ligase (443 aa).

110-116 (GAHGKTS) is a binding site for ATP.

It belongs to the MurCDEF family.

The protein localises to the cytoplasm. The catalysed reaction is UDP-N-acetyl-alpha-D-muramate + L-alanine + ATP = UDP-N-acetyl-alpha-D-muramoyl-L-alanine + ADP + phosphate + H(+). It participates in cell wall biogenesis; peptidoglycan biosynthesis. Cell wall formation. The chain is UDP-N-acetylmuramate--L-alanine ligase from Lactococcus lactis subsp. lactis (strain IL1403) (Streptococcus lactis).